Consider the following 126-residue polypeptide: Glycine cleavage system H protein (126 aa).

The region spanning 19 to 100 (DGKIGITDHA…AHAAWMVKVE (82 aa)) is the Lipoyl-binding domain. Lys-60 is subject to N6-lipoyllysine.

It belongs to the GcvH family. The glycine cleavage system is composed of four proteins: P, T, L and H. The cofactor is (R)-lipoate.

In terms of biological role, the glycine cleavage system catalyzes the degradation of glycine. The H protein shuttles the methylamine group of glycine from the P protein to the T protein. The chain is Glycine cleavage system H protein from Koribacter versatilis (strain Ellin345).